A 187-amino-acid chain; its full sequence is Prepronociceptin (187 aa).

Residues 1 to 19 (MKILFCDVLLLSLLSSVFS) form the signal peptide. The propeptide occupies 20-95 (SCPRDCLTCQ…QPKASEMQHL (76 aa)). 3 repeat units span residues 109–114 (DAEPGA), 115–120 (DAEPGA), and 121–126 (DAEPGA). Residues 109-126 (DAEPGADAEPGADAEPGA) form a 3 X 6 AA tandem repeats of D-A-E-P-G-A region. The tract at residues 109-133 (DAEPGADAEPGADAEPGADDAEEVE) is disordered. Residues 112 to 131 (PGADAEPGADAEPGADDAEE) show a composition bias toward acidic residues. The propeptide occupies 180 to 187 (TLHQNGNV).

It belongs to the opioid neuropeptide precursor family. In terms of processing, specific enzymatic cleavages at paired basic residues probably yield other active peptides besides nociceptin. Post-translationally, the N-terminal domain contains 6 conserved cysteines thought to be involved in disulfide bonding and/or processing. In terms of tissue distribution, brain and spinal cord. Low levels in kidney and spleen.

Its subcellular location is the secreted. Ligand of the opioid receptor-like receptor OPRL1. It may act as a transmitter in the brain by modulating nociceptive and locomotor behavior. May be involved in neuronal differentiation and development. When administered intracerebroventricularly, nociceptin induces hyperalgesia and decreases locomotor activity. Functionally, blocks nociceptin action in pain transmission by inhibiting nociceptin-induced hyperalgesia and allodynia. Its function is as follows. Has potent analgesic activity. The polypeptide is Prepronociceptin (Pnoc) (Mus musculus (Mouse)).